We begin with the raw amino-acid sequence, 274 residues long: Undecaprenyl-diphosphatase 1 (274 aa).

Helical transmembrane passes span 4–24, 45–65, 84–104, 111–131, 146–166, 186–206, 217–237, and 249–269; these read LLLL…FLPI, SAVF…YEYW, HLAI…LSFG, LFND…IMWI, IGLK…IPGT, ATEF…LLDL, FDWS…LLLI, and FMVF…FAYT.

The protein belongs to the UppP family.

The protein resides in the cell inner membrane. It catalyses the reaction di-trans,octa-cis-undecaprenyl diphosphate + H2O = di-trans,octa-cis-undecaprenyl phosphate + phosphate + H(+). Its function is as follows. Catalyzes the dephosphorylation of undecaprenyl diphosphate (UPP). Confers resistance to bacitracin. The polypeptide is Undecaprenyl-diphosphatase 1 (Acinetobacter baylyi (strain ATCC 33305 / BD413 / ADP1)).